The following is a 755-amino-acid chain: ABC transporter G family member 2 (755 aa).

The 261-residue stretch at L98–E358 folds into the ABC transporter domain. G151–S158 serves as a coordination point for ATP. The ABC transmembrane type-2 domain occupies I449 to F659. Transmembrane regions (helical) follow at residues L468–T488, F503–L523, I552–L572, F579–F599, L609–I629, and L728–I748.

The protein belongs to the ABC transporter superfamily. ABCG family. Eye pigment precursor importer (TC 3.A.1.204) subfamily.

Its subcellular location is the membrane. This chain is ABC transporter G family member 2 (ABCG2), found in Arabidopsis thaliana (Mouse-ear cress).